The following is a 248-amino-acid chain: UPF0736 protein BCE33L1074 (248 aa).

It belongs to the UPF0736 family.

The chain is UPF0736 protein BCE33L1074 from Bacillus cereus (strain ZK / E33L).